A 100-amino-acid polypeptide reads, in one-letter code: Small ubiquitin-related modifier 1 (100 aa).

Residues 19–96 (EYIKLKVIGQ…IEVYQEQTGG (78 aa)) enclose the Ubiquitin-like domain. Glycine 96 is covalently cross-linked (Glycyl lysine isopeptide (Gly-Lys) (interchain with K-? in acceptor proteins)). Residues 97–100 (CRND) constitute a propeptide that is removed on maturation.

Belongs to the ubiquitin family. SUMO subfamily. In terms of assembly, interacts with sae2, ube2i, ranbp2, pias1 and pias2. Covalently attached to a number of proteins. Post-translationally, cleavage of precursor form by a sentrin-specific protease is necessary for function.

The protein localises to the nucleus membrane. The protein resides in the nucleus speckle. It localises to the cytoplasm. It is found in the nucleus. Its subcellular location is the PML body. The protein localises to the cell membrane. In terms of biological role, ubiquitin-like protein that can be covalently attached to proteins as a monomer or a lysine-linked polymer. Covalent attachment via an isopeptide bond to its substrates requires prior activation by the E1 complex sae1-sae2 and linkage to the E2 enzyme ube2i. This post-translational modification on lysine residues of proteins plays a crucial role in a number of cellular processes such as nuclear transport, DNA replication and repair, mitosis and signal transduction. Polymeric sumo1 chains are also susceptible to polyubiquitination which functions as a signal for proteasomal degradation of modified proteins. This is Small ubiquitin-related modifier 1 (sumo1) from Danio rerio (Zebrafish).